We begin with the raw amino-acid sequence, 208 residues long: Putative archaetidylserine decarboxylase proenzyme (208 aa).

Ser172 acts as the Schiff-base intermediate with substrate; via pyruvic acid in catalysis. A Pyruvic acid (Ser); by autocatalysis modification is found at Ser172.

This sequence belongs to the phosphatidylserine decarboxylase family. PSD-A subfamily. As to quaternary structure, heterodimer of a large membrane-associated beta subunit and a small pyruvoyl-containing alpha subunit. Requires pyruvate as cofactor. In terms of processing, is synthesized initially as an inactive proenzyme. Formation of the active enzyme involves a self-maturation process in which the active site pyruvoyl group is generated from an internal serine residue via an autocatalytic post-translational modification. Two non-identical subunits are generated from the proenzyme in this reaction, and the pyruvate is formed at the N-terminus of the alpha chain, which is derived from the carboxyl end of the proenzyme. The post-translation cleavage follows an unusual pathway, termed non-hydrolytic serinolysis, in which the side chain hydroxyl group of the serine supplies its oxygen atom to form the C-terminus of the beta chain, while the remainder of the serine residue undergoes an oxidative deamination to produce ammonia and the pyruvoyl prosthetic group on the alpha chain.

The protein localises to the cell membrane. It catalyses the reaction archaetidylserine + H(+) = archaetidylethanolamine + CO2. Catalyzes the formation of archaetidylethanolamine (PtdEtn) from archaetidylserine (PtdSer). The chain is Putative archaetidylserine decarboxylase proenzyme from Methanosarcina acetivorans (strain ATCC 35395 / DSM 2834 / JCM 12185 / C2A).